Consider the following 459-residue polypeptide: Nuclear distribution protein nudF 1 (459 aa).

The 33-residue stretch at Gln-9 to Glu-41 folds into the LisH domain. Residues Thr-61 to Thr-88 adopt a coiled-coil conformation. WD repeat units follow at residues Ser-114–Lys-155, His-157–Arg-197, Gly-201–Thr-240, Gly-243–Ala-282, Gly-288–Leu-349, Gly-351–Lys-390, Ala-395–Gln-440, and Arg-442–Asn-459.

This sequence belongs to the WD repeat LIS1/nudF family. Self-associates. Interacts with nudE and dynein.

The protein resides in the cytoplasm. Its subcellular location is the cytoskeleton. It localises to the spindle pole. In terms of biological role, positively regulates the activity of the minus-end directed microtubule motor protein dynein. May enhance dynein-mediated microtubule sliding by targeting dynein to the microtubule plus end. Required for nuclear migration during vegetative growth as well as development. Required for retrograde early endosome (EE) transport from the hyphal tip. Required for localization of dynein to the mitotic spindle poles. Recruits additional proteins to the dynein complex at SPBs. The protein is Nuclear distribution protein nudF 1 of Talaromyces marneffei (strain ATCC 18224 / CBS 334.59 / QM 7333) (Penicillium marneffei).